The primary structure comprises 319 residues: Acetyl-coenzyme A carboxylase carboxyl transferase subunit alpha (319 aa).

The region spanning 39–293 (KLEQKAAQLL…GDAIAEELKG (255 aa)) is the CoA carboxyltransferase C-terminal domain.

It belongs to the AccA family. Acetyl-CoA carboxylase is a heterohexamer composed of biotin carboxyl carrier protein (AccB), biotin carboxylase (AccC) and two subunits each of ACCase subunit alpha (AccA) and ACCase subunit beta (AccD).

Its subcellular location is the cytoplasm. It carries out the reaction N(6)-carboxybiotinyl-L-lysyl-[protein] + acetyl-CoA = N(6)-biotinyl-L-lysyl-[protein] + malonyl-CoA. Its pathway is lipid metabolism; malonyl-CoA biosynthesis; malonyl-CoA from acetyl-CoA: step 1/1. In terms of biological role, component of the acetyl coenzyme A carboxylase (ACC) complex. First, biotin carboxylase catalyzes the carboxylation of biotin on its carrier protein (BCCP) and then the CO(2) group is transferred by the carboxyltransferase to acetyl-CoA to form malonyl-CoA. The sequence is that of Acetyl-coenzyme A carboxylase carboxyl transferase subunit alpha from Parvibaculum lavamentivorans (strain DS-1 / DSM 13023 / NCIMB 13966).